We begin with the raw amino-acid sequence, 111 residues long: GLQLTSPLLTAWWFLACSTNMALPPTINLSGELTLITSLFSWLDITVFLTGLSAFATTTYTLYMFSSTQQGTLPPNIKPSSPSQTREHFLMLLHLLPSAGLATNPKLTAPQ.

A helical membrane pass occupies residues 35–55; that stretch reads LITSLFSWLDITVFLTGLSAF.

It belongs to the complex I subunit 4 family.

It localises to the mitochondrion membrane. It catalyses the reaction a ubiquinone + NADH + 5 H(+)(in) = a ubiquinol + NAD(+) + 4 H(+)(out). Functionally, core subunit of the mitochondrial membrane respiratory chain NADH dehydrogenase (Complex I) that is believed to belong to the minimal assembly required for catalysis. Complex I functions in the transfer of electrons from NADH to the respiratory chain. The immediate electron acceptor for the enzyme is believed to be ubiquinone. The polypeptide is NADH-ubiquinone oxidoreductase chain 4 (MT-ND4) (Caiman crocodilus (Spectacled caiman)).